Reading from the N-terminus, the 431-residue chain is Glutamate-1-semialdehyde 2,1-aminomutase (431 aa).

At Lys269 the chain carries N6-(pyridoxal phosphate)lysine.

This sequence belongs to the class-III pyridoxal-phosphate-dependent aminotransferase family. HemL subfamily. In terms of assembly, homodimer. It depends on pyridoxal 5'-phosphate as a cofactor.

Its subcellular location is the cytoplasm. It catalyses the reaction (S)-4-amino-5-oxopentanoate = 5-aminolevulinate. The protein operates within porphyrin-containing compound metabolism; protoporphyrin-IX biosynthesis; 5-aminolevulinate from L-glutamyl-tRNA(Glu): step 2/2. It participates in porphyrin-containing compound metabolism; chlorophyll biosynthesis. The chain is Glutamate-1-semialdehyde 2,1-aminomutase from Chlorobium limicola (strain DSM 245 / NBRC 103803 / 6330).